The following is a 415-amino-acid chain: Beta-2 adrenergic receptor (415 aa).

Over 1-34 (MGQPANRSVFLLAPNGSHAPDQGDSQERSEAWVV) the chain is Extracellular. N-linked (GlcNAc...) asparagine glycosylation is found at N6 and N15. A helical transmembrane segment spans residues 35-58 (GMGIVMSLIVLAIVFGNVLVITAI). The Cytoplasmic segment spans residues 59–71 (ARFERLQTVTNYF). A helical membrane pass occupies residues 72 to 95 (ITSLACADLVMGLAVVPFGASHIL). The Extracellular portion of the chain corresponds to 96 to 106 (MKMWTFGNFWC). Intrachain disulfides connect C106/C191 and C184/C190. Residues 107–129 (EFWTSIDVLCVTASIETLCVIAV) form a helical membrane-spanning segment. The Cytoplasmic segment spans residues 130 to 150 (DRYFAITSPFKYQSLLTKNKA). Y141 carries the phosphotyrosine modification. A helical membrane pass occupies residues 151 to 174 (RVVILMVWIVSGLTSFLPIQMHWY). Residues 175–196 (RATHQEAINCYAKETCCDFFTN) lie on the Extracellular side of the membrane. A helical membrane pass occupies residues 197-220 (QAYAIASSIVSFYLPLVVMVFVYS). At 221 to 274 (RVFQVAQRQLQKIDRSEGRFHAQNLSQVEQDGRSGHGHRRSSKFCLKEHKALKT) the chain is on the cytoplasmic side. Residue S246 is modified to Phosphoserine. Phosphoserine; by PKA is present on residues S261 and S262. A lipid anchor (S-palmitoyl cysteine) is attached at C265. The chain crosses the membrane as a helical span at residues 275-298 (LGIIMGTFTLCWLPFFIVNIVHVI). Residues 299-305 (QDNLIPK) lie on the Extracellular side of the membrane. Residues 306–329 (EVYILLNWVGYVNSAFNPLIYCRS) form a helical membrane-spanning segment. The Cytoplasmic portion of the chain corresponds to 330-415 (PDFRIAFQEL…RNCSTNDSLL (86 aa)). C341 carries S-palmitoyl cysteine lipidation. Residues S345 and S346 each carry the phosphoserine; by PKA modification. S355 carries the phosphoserine; by BARK modification. Residues 379-415 (SELLCEDPPGTEDRQGTVPSDSVDSQGRNCSTNDSLL) form a disordered region. P387 and P397 each carry 4-hydroxyproline. Positions 395-415 (TVPSDSVDSQGRNCSTNDSLL) are enriched in polar residues. The PDZ-binding signature appears at 412 to 415 (DSLL).

Belongs to the G-protein coupled receptor 1 family. Adrenergic receptor subfamily. ADRB2 sub-subfamily. In terms of assembly, binds NHERF1 and GPRASP1. Interacts with ARRB1 and ARRB2. Interacts with SRC. Interacts with USP20 and USP33. Interacts with VHL; the interaction, which is increased on hydroxylation of ADRB2, ubiquitinates ADRB2 leading to its degradation. Interacts with EGLN3; the interaction hydroxylates ADRB2 facilitating VHL-E3 ligase-mediated ubiquitination. Interacts (via PDZ-binding motif) with SNX27 (via PDZ domain); the interaction is required when endocytosed to prevent degradation in lysosomes and promote recycling to the plasma membrane. Interacts with CNIH4. Interacts with ARRDC3. Interacts with NEDD4. Interacts with MARCHF2. In terms of processing, palmitoylated; may reduce accessibility of Ser-345 and Ser-346 by anchoring Cys-341 to the plasma membrane. Agonist stimulation promotes depalmitoylation and further allows Ser-345 and Ser-346 phosphorylation. Phosphorylated by PKA and BARK upon agonist stimulation, which mediates homologous desensitization of the receptor. PKA-mediated phosphorylation seems to facilitate phosphorylation by BARK. Post-translationally, phosphorylation of Tyr-141 is induced by insulin and leads to supersensitization of the receptor. In terms of processing, polyubiquitinated. Agonist-induced ubiquitination leads to sort internalized receptors to the lysosomes for degradation. Deubiquitination by USP20 and USP33, leads to ADRB2 recycling and resensitization after prolonged agonist stimulation. USP20 and USP33 are constitutively associated and are dissociated immediately after agonist stimulation. Ubiquitination by the VHL-E3 ligase complex is oxygen-dependent. Hydroxylation by EGLN3 occurs only under normoxia and increases the interaction with VHL and the subsequent ubiquitination and degradation of ADRB2. Post-translationally, palmitoylated. Mainly palmitoylated at Cys-341. Palmitoylation may reduce accessibility of phosphorylation sites by anchoring the receptor to the plasma membrane. Agonist stimulation promotes depalmitoylation and further allows Ser-345 and Ser-346 phosphorylation. Also undergoes transient, ligand-induced palmitoylation at Cys-265 probably by ZDHHC9, ZDHHC14 and ZDHHC18 within the Golgi. Palmitoylation at Cys-265 requires phosphorylation by PKA and receptor internalization and stabilizes the receptor. Could be depalmitoylated by LYPLA1 at the plasma membrane.

The protein localises to the cell membrane. It localises to the early endosome. Its subcellular location is the golgi apparatus. Its function is as follows. Beta-adrenergic receptors mediate the catecholamine-induced activation of adenylate cyclase through the action of G proteins. The beta-2-adrenergic receptor binds epinephrine with an approximately 30-fold greater affinity than it does norepinephrine. This chain is Beta-2 adrenergic receptor (ADRB2), found in Canis lupus familiaris (Dog).